Here is a 120-residue protein sequence, read N- to C-terminus: FK506-binding protein 1A (120 aa).

The PPIase FKBP-type domain maps to 26–114 (GDNVDVHYKG…IFETELVGIK (89 aa)).

This sequence belongs to the FKBP-type PPIase family. FKBP1 subfamily.

The protein resides in the cytoplasm. It carries out the reaction [protein]-peptidylproline (omega=180) = [protein]-peptidylproline (omega=0). PPIases accelerate the folding of proteins. It catalyzes the cis-trans isomerization of proline imidic peptide bonds in oligopeptides. The chain is FK506-binding protein 1A (fkr-2) from Neurospora crassa (strain ATCC 24698 / 74-OR23-1A / CBS 708.71 / DSM 1257 / FGSC 987).